The primary structure comprises 186 residues: Ribosome-recycling factor (186 aa).

Belongs to the RRF family.

It is found in the cytoplasm. Its function is as follows. Responsible for the release of ribosomes from messenger RNA at the termination of protein biosynthesis. May increase the efficiency of translation by recycling ribosomes from one round of translation to another. The chain is Ribosome-recycling factor from Phocaeicola vulgatus (strain ATCC 8482 / DSM 1447 / JCM 5826 / CCUG 4940 / NBRC 14291 / NCTC 11154) (Bacteroides vulgatus).